A 217-amino-acid polypeptide reads, in one-letter code: MINLILLGLPGAGKGTASESIVDKYHLAHISTGDMFREAMANETPVGLEAKSYIDKGDLVPDEVTAKLVEERLKQPDTKNGFILDGFPRTTVQAELLEGITKRLEKPLTNVIAIDVDEDVLIKRLSARYICKNCGATYNKISNPTKVEGTCDRCGGHEFFQREDDKPEVVKNRLEVNKKMNTPLRDFYEEKGILSTVNGEQTPEKVFEDIDKILSKD.

11-16 (GAGKGT) serves as a coordination point for ATP. Residues 31 to 60 (STGDMFREAMANETPVGLEAKSYIDKGDLV) are NMP. Residues Thr-32, Arg-37, 58–60 (DLV), 86–89 (GFPR), and Gln-93 each bind AMP. The LID stretch occupies residues 127 to 165 (ARYICKNCGATYNKISNPTKVEGTCDRCGGHEFFQREDD). Arg-128 provides a ligand contact to ATP. Zn(2+) is bound by residues Cys-131 and Cys-134. 137 to 138 (TY) lines the ATP pocket. Positions 151 and 154 each coordinate Zn(2+). AMP-binding residues include Arg-162 and Arg-173. Residue Gln-201 coordinates ATP.

Belongs to the adenylate kinase family. In terms of assembly, monomer.

Its subcellular location is the cytoplasm. It carries out the reaction AMP + ATP = 2 ADP. The protein operates within purine metabolism; AMP biosynthesis via salvage pathway; AMP from ADP: step 1/1. Functionally, catalyzes the reversible transfer of the terminal phosphate group between ATP and AMP. Plays an important role in cellular energy homeostasis and in adenine nucleotide metabolism. The sequence is that of Adenylate kinase from Lactobacillus gasseri (strain ATCC 33323 / DSM 20243 / BCRC 14619 / CIP 102991 / JCM 1131 / KCTC 3163 / NCIMB 11718 / NCTC 13722 / AM63).